We begin with the raw amino-acid sequence, 363 residues long: Aspartate carbamoyltransferase, chloroplastic (363 aa).

Residues 1 to 21 (MAAARATLPLPRVPAPSPRPQ) form a disordered region. The N-terminal 36 residues, 1 to 36 (MAAARATLPLPRVPAPSPRPQLRPFPSLPARRGAVA), are a transit peptide targeting the chloroplast. A compositionally biased stretch (pro residues) spans 11-21 (PRVPAPSPRPQ). Residues Arg-109 and Thr-110 each contribute to the carbamoyl phosphate site. Residues Arg-109 and Thr-110 each coordinate UMP. Residue Lys-139 participates in L-aspartate binding. Carbamoyl phosphate contacts are provided by Arg-160, His-188, and Gln-191. Arg-160 and His-188 together coordinate UMP. Arg-221 and Arg-283 together coordinate UMP. L-aspartate contacts are provided by Arg-221 and Arg-283. The carbamoyl phosphate site is built by Leu-323 and Pro-324.

This sequence belongs to the aspartate/ornithine carbamoyltransferase superfamily. ATCase family. Homotrimer.

The protein resides in the plastid. The protein localises to the chloroplast. The enzyme catalyses carbamoyl phosphate + L-aspartate = N-carbamoyl-L-aspartate + phosphate + H(+). It participates in pyrimidine metabolism; UMP biosynthesis via de novo pathway; (S)-dihydroorotate from bicarbonate: step 2/3. Feedback inhibited by UMP. In terms of biological role, catalyzes the condensation of carbamoyl phosphate and aspartate to form carbamoyl aspartate and inorganic phosphate, the committed step in the de novo pyrimidine nucleotide biosynthesis pathway. The chain is Aspartate carbamoyltransferase, chloroplastic (PYRB) from Oryza sativa subsp. japonica (Rice).